The chain runs to 274 residues: Formamidopyrimidine-DNA glycosylase (274 aa).

P2 functions as the Schiff-base intermediate with DNA in the catalytic mechanism. The active-site Proton donor is E3. K58 (proton donor; for beta-elimination activity) is an active-site residue. DNA is bound by residues H91 and R110. An FPG-type zinc finger spans residues 238-272 (QVYDKTGQECVRCGTIIEKIQLGGRGTHFCPNCQR). The active-site Proton donor; for delta-elimination activity is R262.

This sequence belongs to the FPG family. In terms of assembly, monomer. It depends on Zn(2+) as a cofactor.

It carries out the reaction Hydrolysis of DNA containing ring-opened 7-methylguanine residues, releasing 2,6-diamino-4-hydroxy-5-(N-methyl)formamidopyrimidine.. The enzyme catalyses 2'-deoxyribonucleotide-(2'-deoxyribose 5'-phosphate)-2'-deoxyribonucleotide-DNA = a 3'-end 2'-deoxyribonucleotide-(2,3-dehydro-2,3-deoxyribose 5'-phosphate)-DNA + a 5'-end 5'-phospho-2'-deoxyribonucleoside-DNA + H(+). Functionally, involved in base excision repair of DNA damaged by oxidation or by mutagenic agents. Acts as a DNA glycosylase that recognizes and removes damaged bases. Has a preference for oxidized purines, such as 7,8-dihydro-8-oxoguanine (8-oxoG). Has AP (apurinic/apyrimidinic) lyase activity and introduces nicks in the DNA strand. Cleaves the DNA backbone by beta-delta elimination to generate a single-strand break at the site of the removed base with both 3'- and 5'-phosphates. The sequence is that of Formamidopyrimidine-DNA glycosylase from Streptococcus pneumoniae serotype 4 (strain ATCC BAA-334 / TIGR4).